A 171-amino-acid chain; its full sequence is UPF0763 protein HPP12_0677 (171 aa).

This sequence belongs to the UPF0763 family.

The polypeptide is UPF0763 protein HPP12_0677 (Helicobacter pylori (strain P12)).